The chain runs to 386 residues: Formate-dependent phosphoribosylglycinamide formyltransferase (386 aa).

Residues 15–16 (EL) and Glu75 each bind N(1)-(5-phospho-beta-D-ribosyl)glycinamide. Residues Arg107, Lys148, 153–158 (SSGKGQ), 188–191 (EQFI), and Glu196 each bind ATP. Positions 112–301 (ALAAQQLNLQ…EFELHLRAIV (190 aa)) constitute an ATP-grasp domain. Glu260 and Glu272 together coordinate Mg(2+). Residues Asp279, Lys349, and 356 to 357 (RR) each bind N(1)-(5-phospho-beta-D-ribosyl)glycinamide.

Belongs to the PurK/PurT family. In terms of assembly, homodimer.

The catalysed reaction is N(1)-(5-phospho-beta-D-ribosyl)glycinamide + formate + ATP = N(2)-formyl-N(1)-(5-phospho-beta-D-ribosyl)glycinamide + ADP + phosphate + H(+). It participates in purine metabolism; IMP biosynthesis via de novo pathway; N(2)-formyl-N(1)-(5-phospho-D-ribosyl)glycinamide from N(1)-(5-phospho-D-ribosyl)glycinamide (formate route): step 1/1. Involved in the de novo purine biosynthesis. Catalyzes the transfer of formate to 5-phospho-ribosyl-glycinamide (GAR), producing 5-phospho-ribosyl-N-formylglycinamide (FGAR). Formate is provided by PurU via hydrolysis of 10-formyl-tetrahydrofolate. This is Formate-dependent phosphoribosylglycinamide formyltransferase from Francisella tularensis subsp. tularensis (strain SCHU S4 / Schu 4).